Consider the following 94-residue polypeptide: MNLYEVLRRPLISEKNSVHATQNKYAFEIAKGANKRMVKLAVEQAFNVTVEDVNMLHIPGKQKRMGRNLIQTAGLRKAIITLKEGDKITLFEGV.

It belongs to the universal ribosomal protein uL23 family. As to quaternary structure, part of the 50S ribosomal subunit. Contacts protein L29, and trigger factor when it is bound to the ribosome.

One of the early assembly proteins it binds 23S rRNA. One of the proteins that surrounds the polypeptide exit tunnel on the outside of the ribosome. Forms the main docking site for trigger factor binding to the ribosome. This is Large ribosomal subunit protein uL23 from Dehalococcoides mccartyi (strain ATCC BAA-2100 / JCM 16839 / KCTC 5957 / BAV1).